Here is a 130-residue protein sequence, read N- to C-terminus: Early E3B 14.5 kDa protein (130 aa).

Positions 1–19 are cleaved as a signal peptide; sequence MKRIVTFVLLIFCALPVLC. The helical transmembrane segment at 53–77 threads the bilayer; that stretch reads AWLYAIISVMVFCSTIFALAIYPYL.

The protein belongs to the adenoviridae E3_14 family. Phosphorylated on serine; O-glycosylated, but not N-glycosylated.

The protein localises to the host membrane. In terms of biological role, down-regulates the EGF receptor and prevents cytolysis by TNF. The sequence is that of Early E3B 14.5 kDa protein from Human adenovirus C serotype 6 (HAdV-6).